An 860-amino-acid polypeptide reads, in one-letter code: Eukaryotic translation initiation factor 3 subunit C (860 aa).

The disordered stretch occupies residues 1-76 (MSRFFYGNDS…SEESEEEDVV (76 aa)). The segment covering 10 to 51 (SDSDSSGSDEEELYSDEEVEQSEEESSEEDASSEEESSEDED) has biased composition (acidic residues). The 175-residue stretch at 599-773 (FHMHINLELL…DAIVFRKGVE (175 aa)) folds into the PCI domain. A disordered region spans residues 812-860 (RDQGAGARGGRGPRGGGQARGGPRLPGGQQRRPGGQQFGGGALGGAIKA). The span at 817–831 (GARGGRGPRGGGQAR) shows a compositional bias: gly residues. Residues 832–846 (GGPRLPGGQQRRPGG) are compositionally biased toward low complexity. The span at 847–860 (QQFGGGALGGAIKA) shows a compositional bias: gly residues.

It belongs to the eIF-3 subunit C family. As to quaternary structure, component of the eukaryotic translation initiation factor 3 (eIF-3) complex.

It localises to the cytoplasm. Component of the eukaryotic translation initiation factor 3 (eIF-3) complex, which is involved in protein synthesis of a specialized repertoire of mRNAs and, together with other initiation factors, stimulates binding of mRNA and methionyl-tRNAi to the 40S ribosome. The eIF-3 complex specifically targets and initiates translation of a subset of mRNAs involved in cell proliferation. This chain is Eukaryotic translation initiation factor 3 subunit C (nip1), found in Emericella nidulans (strain FGSC A4 / ATCC 38163 / CBS 112.46 / NRRL 194 / M139) (Aspergillus nidulans).